A 257-amino-acid chain; its full sequence is NAD-capped RNA hydrolase NudC (257 aa).

Position 69 (arginine 69) interacts with substrate. Residues cysteine 98 and cysteine 101 each coordinate Zn(2+). Position 111 (glutamate 111) interacts with substrate. 2 residues coordinate Zn(2+): cysteine 116 and cysteine 119. Tyrosine 124 provides a ligand contact to substrate. Residues 125–248 (PQIAPCIIVA…TVARRLIEDT (124 aa)) enclose the Nudix hydrolase domain. Residues alanine 158, glutamate 174, and glutamate 178 each contribute to the a divalent metal cation site. The Nudix box motif lies at 159–180 (GFVEVGETLEQAAAREIFEESR). Residue 192-199 (QPWPFPHS) participates in substrate binding. A divalent metal cation is bound at residue glutamate 219. Residue alanine 241 coordinates substrate.

It belongs to the Nudix hydrolase family. NudC subfamily. As to quaternary structure, homodimer. Requires Mg(2+) as cofactor. Mn(2+) serves as cofactor. It depends on Zn(2+) as a cofactor.

It carries out the reaction a 5'-end NAD(+)-phospho-ribonucleoside in mRNA + H2O = a 5'-end phospho-adenosine-phospho-ribonucleoside in mRNA + beta-nicotinamide D-ribonucleotide + 2 H(+). The catalysed reaction is NAD(+) + H2O = beta-nicotinamide D-ribonucleotide + AMP + 2 H(+). The enzyme catalyses NADH + H2O = reduced beta-nicotinamide D-ribonucleotide + AMP + 2 H(+). Functionally, mRNA decapping enzyme that specifically removes the nicotinamide adenine dinucleotide (NAD) cap from a subset of mRNAs by hydrolyzing the diphosphate linkage to produce nicotinamide mononucleotide (NMN) and 5' monophosphate mRNA. The NAD-cap is present at the 5'-end of some mRNAs and stabilizes RNA against 5'-processing. Has preference for mRNAs with a 5'-end purine. Catalyzes the hydrolysis of a broad range of dinucleotide pyrophosphates. This chain is NAD-capped RNA hydrolase NudC, found in Edwardsiella ictaluri (strain 93-146).